We begin with the raw amino-acid sequence, 411 residues long: Fructose-1,6-bisphosphatase, chloroplastic (411 aa).

The N-terminal 53 residues, 1-53 (MAATAGATPSSHLLLSSSRHVAASPQPRILFPSLSGKRVAVGKNHHATGVRCM), are a transit peptide targeting the chloroplast. Mg(2+)-binding residues include Glu-133, Glu-162, Asp-183, Leu-185, and Asp-186. 186–189 (DGSS) lines the substrate pocket. A disulfide bond links Cys-227 and Cys-232. Residues Asn-291, Tyr-323, Tyr-341, Tyr-343, and Lys-353 each coordinate substrate. Residue Glu-359 coordinates Mg(2+).

The protein belongs to the FBPase class 1 family. As to quaternary structure, homotetramer. The cofactor is Mg(2+).

It is found in the plastid. It localises to the chloroplast stroma. The catalysed reaction is beta-D-fructose 1,6-bisphosphate + H2O = beta-D-fructose 6-phosphate + phosphate. It functions in the pathway carbohydrate biosynthesis; Calvin cycle. In Brassica napus (Rape), this protein is Fructose-1,6-bisphosphatase, chloroplastic (FBP).